A 298-amino-acid polypeptide reads, in one-letter code: Porphobilinogen deaminase (298 aa).

C239 carries the post-translational modification S-(dipyrrolylmethanemethyl)cysteine.

This sequence belongs to the HMBS family. As to quaternary structure, monomer. It depends on dipyrromethane as a cofactor.

The catalysed reaction is 4 porphobilinogen + H2O = hydroxymethylbilane + 4 NH4(+). The protein operates within porphyrin-containing compound metabolism; protoporphyrin-IX biosynthesis; coproporphyrinogen-III from 5-aminolevulinate: step 2/4. Tetrapolymerization of the monopyrrole PBG into the hydroxymethylbilane pre-uroporphyrinogen in several discrete steps. The chain is Porphobilinogen deaminase from Ehrlichia canis (strain Jake).